Reading from the N-terminus, the 442-residue chain is NAD(P)H sulfur oxidoreductase (CoA-dependent) (442 aa).

13–14 is an FAD binding site; it reads AA. Arg-24 contributes to the CoA binding site. FAD is bound by residues 35–36 and 42–44; these read EA and HAP. CoA is bound by residues 41-45, 62-63, and Arg-72; these read SHAPC and HY. The active-site Redox-active is the Cys-45. Positions 82, 280, and 298 each coordinate FAD. CoA is bound by residues Asn-302 and Lys-358. Tyr-422 is a binding site for FAD. 2 residues coordinate CoA: Trp-430 and Arg-438.

The protein belongs to the class-III pyridine nucleotide-disulfide oxidoreductase family. In terms of assembly, homodimer. FAD is required as a cofactor.

Its subcellular location is the cytoplasm. The catalysed reaction is hydrogen sulfide + NADP(+) = sulfur + NADPH. It catalyses the reaction hydrogen sulfide + NAD(+) = sulfur + NADH. The enzyme catalyses NADP(+) + 2 CoA = CoA-disulfide + NADPH + H(+). It carries out the reaction NAD(+) + 2 CoA = CoA-disulfide + NADH + H(+). Its function is as follows. Catalyzes the CoA-dependent reduction of elemental sulfur (S(0)) to produce hydrogen sulfide. Can use both NADPH and NADH, but shows a preference for NADPH. May enable S(0) to be used, via sulfide, for iron-sulfur cluster synthesis by SipA. Also shows coenzyme A disulfide reductase (CoADR) activity with both NADH and NADPH. However, CoADR specific activity is about 20-fold lower than the sulfur reduction assay and CoADR activity appears to be an artifactual side reaction and is not thought to have any physiological relevance. Also shows NAD(P)H oxidase activity with both NADH and NADPH. In Pyrococcus furiosus (strain ATCC 43587 / DSM 3638 / JCM 8422 / Vc1), this protein is NAD(P)H sulfur oxidoreductase (CoA-dependent).